Reading from the N-terminus, the 227-residue chain is Cytochrome c oxidase subunit 2 (227 aa).

Topologically, residues 1–26 (MATWSNLSIQDGASPLMEQLSFFHDD) are mitochondrial intermembrane. A helical transmembrane segment spans residues 27–48 (HTMVVLLITVIVGYALSYMLFN). Residues 49–62 (AYTNRNMLHGHLIE) lie on the Mitochondrial matrix side of the membrane. A helical transmembrane segment spans residues 63-82 (TIWTALPAITLIFIALPSLR). The Mitochondrial intermembrane segment spans residues 83-227 (LLYLLDDSVD…LFIKWLSKMI (145 aa)). Cu cation contacts are provided by H161, C196, E198, C200, H204, and M207. E198 is a Mg(2+) binding site.

Belongs to the cytochrome c oxidase subunit 2 family. Component of the cytochrome c oxidase (complex IV, CIV), a multisubunit enzyme composed of a catalytic core of 3 subunits and several supernumerary subunits. The complex exists as a monomer or a dimer and forms supercomplexes (SCs) in the inner mitochondrial membrane with ubiquinol-cytochrome c oxidoreductase (cytochrome b-c1 complex, complex III, CIII). The cofactor is Cu cation.

It is found in the mitochondrion inner membrane. It carries out the reaction 4 Fe(II)-[cytochrome c] + O2 + 8 H(+)(in) = 4 Fe(III)-[cytochrome c] + 2 H2O + 4 H(+)(out). Component of the cytochrome c oxidase, the last enzyme in the mitochondrial electron transport chain which drives oxidative phosphorylation. The respiratory chain contains 3 multisubunit complexes succinate dehydrogenase (complex II, CII), ubiquinol-cytochrome c oxidoreductase (cytochrome b-c1 complex, complex III, CIII) and cytochrome c oxidase (complex IV, CIV), that cooperate to transfer electrons derived from NADH and succinate to molecular oxygen, creating an electrochemical gradient over the inner membrane that drives transmembrane transport and the ATP synthase. Cytochrome c oxidase is the component of the respiratory chain that catalyzes the reduction of oxygen to water. Electrons originating from reduced cytochrome c in the intermembrane space (IMS) are transferred via the dinuclear copper A center (CU(A)) of subunit 2 and heme A of subunit 1 to the active site in subunit 1, a binuclear center (BNC) formed by heme A3 and copper B (CU(B)). The BNC reduces molecular oxygen to 2 water molecules using 4 electrons from cytochrome c in the IMS and 4 protons from the mitochondrial matrix. The sequence is that of Cytochrome c oxidase subunit 2 (COII) from Schistocerca gregaria (Desert locust).